We begin with the raw amino-acid sequence, 255 residues long: Zinc-finger homeodomain protein 6 (255 aa).

The tract at residues 1 to 35 (MEFRGHDEPVDEMGVAYGRTPPSSSSSPAASASAG) is disordered. A compositionally biased stretch (low complexity) spans 21-35 (PPSSSSSPAASASAG). The ZF-HD dimerization-type; degenerate zinc-finger motif lies at 45-93 (YHECLRNHAAAMGGHVVDGCREFMPMPGDAADALKCAACGCHRSFHRKD). Residues 106 to 126 (PSPPTPRVPLLMPPPQPQPHP) are compositionally biased toward pro residues. Disordered stretches follow at residues 106 to 181 (PSPP…KFTP) and 226 to 255 (NNKSSIGSSSGGGSRRQPQEQQSQQQQQQQ). Positions 139–153 (YHHTPSGSGGTTTES) are enriched in low complexity. A DNA-binding region (homeobox) is located at residues 172–235 (RKRFRTKFTP…NNKSSIGSSS (64 aa)). A compositionally biased stretch (low complexity) spans 240 to 255 (RRQPQEQQSQQQQQQQ).

In terms of assembly, homo- and heterodimer with other ZFHD proteins.

It localises to the nucleus. Putative transcription factor. The protein is Zinc-finger homeodomain protein 6 (ZHD6) of Oryza sativa subsp. japonica (Rice).